The sequence spans 277 residues: Large ribosomal subunit protein uL2 (277 aa).

Residues 223-277 (VVMNPIDHPHGGGEGRTSGGRHPVTPWGKPTKGKKTRSNKSTNKFILISRHKRKK) are disordered.

Belongs to the universal ribosomal protein uL2 family. As to quaternary structure, part of the 50S ribosomal subunit. Forms a bridge to the 30S subunit in the 70S ribosome.

Its function is as follows. One of the primary rRNA binding proteins. Required for association of the 30S and 50S subunits to form the 70S ribosome, for tRNA binding and peptide bond formation. It has been suggested to have peptidyltransferase activity; this is somewhat controversial. Makes several contacts with the 16S rRNA in the 70S ribosome. This is Large ribosomal subunit protein uL2 from Nitrobacter hamburgensis (strain DSM 10229 / NCIMB 13809 / X14).